Consider the following 959-residue polypeptide: Translation initiation factor IF-2 (959 aa).

A compositionally biased stretch (basic and acidic residues) spans 1–10; it reads MSDKTNDDKT. Residues 1–374 are disordered; sequence MSDKTNDDKT…SQMQETREKI (374 aa). The span at 27 to 37 shows a compositional bias: polar residues; the sequence is EQSTVRQNFSH. Low complexity-rich tracts occupy residues 63–118 and 128–138; these read AAAA…VTKP and QRPGGQQAQRP. 2 stretches are compositionally biased toward basic and acidic residues: residues 154 to 225 and 232 to 241; these read SEMD…EAAK and ARSERRDDAR. The span at 246-284 shows a compositional bias: low complexity; that stretch reads GARPQQAGRPQGGRPQPAGRPQQGSPRPAPIIADAAPIA. The segment covering 318–333 has biased composition (basic and acidic residues); that stretch reads PEVRAPKVVKGEDDRR. Positions 457 to 626 constitute a tr-type G domain; it reads SRPPVVTIMG…LLQAEMLDLK (170 aa). The interval 466–473 is G1; the sequence is GHVDHGKT. Position 466–473 (466–473) interacts with GTP; the sequence is GHVDHGKT. The G2 stretch occupies residues 491–495; sequence GITQH. Residues 512–515 are G3; it reads DTPG. Residues 512-516 and 566-569 contribute to the GTP site; these read DTPGH and NKID. Positions 566–569 are G4; sequence NKID. Residues 602–604 are G5; sequence SAK.

This sequence belongs to the TRAFAC class translation factor GTPase superfamily. Classic translation factor GTPase family. IF-2 subfamily.

It is found in the cytoplasm. One of the essential components for the initiation of protein synthesis. Protects formylmethionyl-tRNA from spontaneous hydrolysis and promotes its binding to the 30S ribosomal subunits. Also involved in the hydrolysis of GTP during the formation of the 70S ribosomal complex. In Brucella abortus (strain 2308), this protein is Translation initiation factor IF-2.